The sequence spans 376 residues: Queuine tRNA-ribosyltransferase (376 aa).

Asp-92 serves as the catalytic Proton acceptor. Residues 92 to 96 (DSGGF), Asp-146, Gln-190, and Gly-217 each bind substrate. Residues 248–254 (GVGRPED) form an RNA binding region. Asp-267 (nucleophile) is an active-site residue. The tract at residues 272 to 276 (TRNAR) is RNA binding; important for wobble base 34 recognition. Zn(2+)-binding residues include Cys-305, Cys-307, Cys-310, and His-337.

This sequence belongs to the queuine tRNA-ribosyltransferase family. In terms of assembly, homodimer. Within each dimer, one monomer is responsible for RNA recognition and catalysis, while the other monomer binds to the replacement base PreQ1. It depends on Zn(2+) as a cofactor.

The catalysed reaction is 7-aminomethyl-7-carbaguanine + guanosine(34) in tRNA = 7-aminomethyl-7-carbaguanosine(34) in tRNA + guanine. The protein operates within tRNA modification; tRNA-queuosine biosynthesis. Catalyzes the base-exchange of a guanine (G) residue with the queuine precursor 7-aminomethyl-7-deazaguanine (PreQ1) at position 34 (anticodon wobble position) in tRNAs with GU(N) anticodons (tRNA-Asp, -Asn, -His and -Tyr). Catalysis occurs through a double-displacement mechanism. The nucleophile active site attacks the C1' of nucleotide 34 to detach the guanine base from the RNA, forming a covalent enzyme-RNA intermediate. The proton acceptor active site deprotonates the incoming PreQ1, allowing a nucleophilic attack on the C1' of the ribose to form the product. After dissociation, two additional enzymatic reactions on the tRNA convert PreQ1 to queuine (Q), resulting in the hypermodified nucleoside queuosine (7-(((4,5-cis-dihydroxy-2-cyclopenten-1-yl)amino)methyl)-7-deazaguanosine). This Stenotrophomonas maltophilia (strain R551-3) protein is Queuine tRNA-ribosyltransferase.